The primary structure comprises 865 residues: Alanine--tRNA ligase (865 aa).

Zn(2+) contacts are provided by histidine 554, histidine 558, cysteine 656, and histidine 660.

It belongs to the class-II aminoacyl-tRNA synthetase family. The cofactor is Zn(2+).

It localises to the cytoplasm. The enzyme catalyses tRNA(Ala) + L-alanine + ATP = L-alanyl-tRNA(Ala) + AMP + diphosphate. In terms of biological role, catalyzes the attachment of alanine to tRNA(Ala) in a two-step reaction: alanine is first activated by ATP to form Ala-AMP and then transferred to the acceptor end of tRNA(Ala). Also edits incorrectly charged Ser-tRNA(Ala) and Gly-tRNA(Ala) via its editing domain. The protein is Alanine--tRNA ligase of Francisella tularensis subsp. mediasiatica (strain FSC147).